The primary structure comprises 366 residues: Carbamoyl phosphate synthase small chain (366 aa).

The interval 1 to 168 (MYGILVLEDG…KETVVYSADD (168 aa)) is CPSase. The L-glutamine site is built by Ser-45, Gly-220, and Gly-222. Residues 172–363 (KCVLIDCGVK…VELGIKFKAE (192 aa)) form the Glutamine amidotransferase type-1 domain. Residue Cys-247 is the Nucleophile of the active site. 5 residues coordinate L-glutamine: Leu-248, Gln-251, Asn-289, Gly-291, and Phe-292. Active-site residues include His-336 and Glu-338.

It belongs to the CarA family. Composed of two chains; the small (or glutamine) chain promotes the hydrolysis of glutamine to ammonia, which is used by the large (or ammonia) chain to synthesize carbamoyl phosphate. Tetramer of heterodimers (alpha,beta)4.

The catalysed reaction is hydrogencarbonate + L-glutamine + 2 ATP + H2O = carbamoyl phosphate + L-glutamate + 2 ADP + phosphate + 2 H(+). It carries out the reaction L-glutamine + H2O = L-glutamate + NH4(+). It participates in amino-acid biosynthesis; L-arginine biosynthesis; carbamoyl phosphate from bicarbonate: step 1/1. Its pathway is pyrimidine metabolism; UMP biosynthesis via de novo pathway; (S)-dihydroorotate from bicarbonate: step 1/3. Small subunit of the glutamine-dependent carbamoyl phosphate synthetase (CPSase). CPSase catalyzes the formation of carbamoyl phosphate from the ammonia moiety of glutamine, carbonate, and phosphate donated by ATP, constituting the first step of 2 biosynthetic pathways, one leading to arginine and/or urea and the other to pyrimidine nucleotides. The small subunit (glutamine amidotransferase) binds and cleaves glutamine to supply the large subunit with the substrate ammonia. The sequence is that of Carbamoyl phosphate synthase small chain from Methanococcus maripaludis (strain C6 / ATCC BAA-1332).